The primary structure comprises 78 residues: Acyl carrier protein (78 aa).

The region spanning 2 to 77 (SDIEARVKKI…NAIDYANTHQ (76 aa)) is the Carrier domain. An O-(pantetheine 4'-phosphoryl)serine modification is found at Ser-37.

The protein belongs to the acyl carrier protein (ACP) family. 4'-phosphopantetheine is transferred from CoA to a specific serine of apo-ACP by AcpS. This modification is essential for activity because fatty acids are bound in thioester linkage to the sulfhydryl of the prosthetic group.

It localises to the cytoplasm. The protein operates within lipid metabolism; fatty acid biosynthesis. Functionally, carrier of the growing fatty acid chain in fatty acid biosynthesis. The protein is Acyl carrier protein of Comamonas testosteroni (Pseudomonas testosteroni).